A 1878-amino-acid chain; its full sequence is DNA polymerase (1878 aa).

Disordered regions lie at residues 691–727 and 1839–1878; these read LFQA…KGPN and TQDD…GTMF. Residues 694 to 709 show a composition bias toward acidic residues; it reads ADDDDDDDDEDEDDGL. The segment covering 710–723 has biased composition (basic and acidic residues); that stretch reads LDERQQDSAEDMKK. Positions 1868–1878 are enriched in low complexity; the sequence is ITAGKTAGTMF.

The protein belongs to the DNA polymerase type-B family.

The catalysed reaction is DNA(n) + a 2'-deoxyribonucleoside 5'-triphosphate = DNA(n+1) + diphosphate. This chain is DNA polymerase, found in Magallana gigas (Pacific oyster).